Here is a 279-residue protein sequence, read N- to C-terminus: NADPH-dependent 7-cyano-7-deazaguanine reductase (279 aa).

86–88 contributes to the substrate binding site; it reads IES. 88–89 provides a ligand contact to NADPH; sequence SK. C186 functions as the Thioimide intermediate in the catalytic mechanism. D193 serves as the catalytic Proton donor. 225 to 226 is a binding site for substrate; that stretch reads HE. 254–255 contributes to the NADPH binding site; that stretch reads RG.

The protein belongs to the GTP cyclohydrolase I family. QueF type 2 subfamily. As to quaternary structure, homodimer.

Its subcellular location is the cytoplasm. It carries out the reaction 7-aminomethyl-7-carbaguanine + 2 NADP(+) = 7-cyano-7-deazaguanine + 2 NADPH + 3 H(+). Its pathway is tRNA modification; tRNA-queuosine biosynthesis. In terms of biological role, catalyzes the NADPH-dependent reduction of 7-cyano-7-deazaguanine (preQ0) to 7-aminomethyl-7-deazaguanine (preQ1). The chain is NADPH-dependent 7-cyano-7-deazaguanine reductase from Chromobacterium violaceum (strain ATCC 12472 / DSM 30191 / JCM 1249 / CCUG 213 / NBRC 12614 / NCIMB 9131 / NCTC 9757 / MK).